Here is a 598-residue protein sequence, read N- to C-terminus: Tail knob protein gp9 (598 aa).

This sequence belongs to the picovirinae distal tube protein family. Homohexamer; forms a hexameric tube structure with six flexible hydrophobic loops.

It is found in the virion. Functionally, distal (knob) tail protein that plugs the end of the tube before DNA ejection and forms a channel perforating the host membrane during ejection. This chain is Tail knob protein gp9 (9), found in Bacillus subtilis (Bacteriophage B103).